Reading from the N-terminus, the 700-residue chain is Calpain-2 catalytic subunit (700 aa).

The residue at position 2 (A2) is an N-acetylalanine. Residues A2–G19 constitute a propeptide, anchors to the small subunit. The Calpain catalytic domain maps to L45–T344. Residues I89, G91, and D96 each coordinate Ca(2+). The active site involves C105. Residues E175, Q229, and K230 each coordinate Ca(2+). Catalysis depends on residues H262 and N286. Residues E292, D299, Q319, and E323 each coordinate Ca(2+). A domain III region spans residues P345–D514. The segment at E515–D529 is linker. Residues I530–L700 form a domain IV region. Ca(2+) is bound by residues A542, D545, E547, E552, D585, D587, S589, K591, E596, D615, D617, S619, T621, E626, D658, and N661. 2 EF-hand domains span residues F572–Q605 and T602–K637.

This sequence belongs to the peptidase C2 family. Forms a heterodimer with a small (regulatory) subunit (CAPNS1). Interacts with CPEB3; this leads to cleavage of CPEB3. Requires Ca(2+) as cofactor. Ubiquitous.

It localises to the cytoplasm. The protein localises to the cell membrane. It carries out the reaction Broad endopeptidase specificity.. With respect to regulation, activated by 200-1000 micromolar concentrations of calcium and inhibited by calpastatin. Calcium-regulated non-lysosomal thiol-protease which catalyzes limited proteolysis of substrates involved in cytoskeletal remodeling and signal transduction. Proteolytically cleaves MYOC at 'Arg-226'. Proteolytically cleaves CPEB3 following neuronal stimulation which abolishes CPEB3 translational repressor activity, leading to translation of CPEB3 target mRNAs. This chain is Calpain-2 catalytic subunit (Capn2), found in Mus musculus (Mouse).